A 142-amino-acid chain; its full sequence is Small ribosomal subunit protein bS6 (142 aa).

The interval 96–142 (VTGQSEMLKAEENRSERRERRERPEHDGSADGDDSDSDSDNSDNADE) is disordered. The segment covering 103 to 124 (LKAEENRSERRERRERPEHDGS) has biased composition (basic and acidic residues). The segment covering 125–142 (ADGDDSDSDSDNSDNADE) has biased composition (acidic residues).

It belongs to the bacterial ribosomal protein bS6 family.

Functionally, binds together with bS18 to 16S ribosomal RNA. The sequence is that of Small ribosomal subunit protein bS6 from Pseudomonas fluorescens (strain Pf0-1).